Here is a 299-residue protein sequence, read N- to C-terminus: Phosphoribosylaminoimidazole-succinocarboxamide synthase (299 aa).

The protein belongs to the SAICAR synthetase family.

It carries out the reaction 5-amino-1-(5-phospho-D-ribosyl)imidazole-4-carboxylate + L-aspartate + ATP = (2S)-2-[5-amino-1-(5-phospho-beta-D-ribosyl)imidazole-4-carboxamido]succinate + ADP + phosphate + 2 H(+). Its pathway is purine metabolism; IMP biosynthesis via de novo pathway; 5-amino-1-(5-phospho-D-ribosyl)imidazole-4-carboxamide from 5-amino-1-(5-phospho-D-ribosyl)imidazole-4-carboxylate: step 1/2. The protein is Phosphoribosylaminoimidazole-succinocarboxamide synthase of Desulfatibacillum aliphaticivorans.